A 533-amino-acid polypeptide reads, in one-letter code: MGKWTDKLYITHSEWSGEVGQHSASSGITGRNSSGGFKRLPFYCCSLSLQPFEHPVCTPDGIIFDLMNIIPYIKKYGTNPVTGEKLETKNLIKLHFHKNDKDEYFCPVTYKVFSDHTTIAAIKTTGNVFAYDTLEKLNIKAKHWKDLLTDEPFTRKDIIMLQDPHNLEKKDMSKFDYLKNNKPEELEKRKPINNINVAGMGNTKKVFDELQKKNSNEDDNKAIEKKEEIPTSFHKKRETLPYNAAHYTTGEAAESFTSTVVNAYTASTRALIDEDEFMYKKIKKKSYARIITNYGNINVELFSDKKPKTCHNFIELAKTGYYNDVIFHRNIKKFMIQGGDPTGTGKGGESIWKRYFPDEIKTTLKHDARGVLSMANRGKDTNGSQFFITYAAAPHLDGLHTVFGKVVGGLDVLSKLESIPVDEKDRPEREIKIKQIQMFVDPFEEYQRRLKNKLTHEANAERENEEMRKRREKEEKMGWFGPSVPKIQTSGGGGVGKYLQSTKRDNSEISNEGEELQKKQKITKTTFGNFDNF.

A U-box domain is found at 38–111 (KRLPFYCCSL…DEYFCPVTYK (74 aa)). Residues 284–438 (KKSYARIITN…REIKIKQIQM (155 aa)) enclose the PPIase cyclophilin-type domain. A coiled-coil region spans residues 443-519 (FEEYQRRLKN…SNEGEELQKK (77 aa)). Basic and acidic residues predominate over residues 454 to 477 (LTHEANAERENEEMRKRREKEEKM). The interval 454–533 (LTHEANAERE…KTTFGNFDNF (80 aa)) is disordered. Positions 523 to 533 (TKTTFGNFDNF) are enriched in polar residues.

The protein belongs to the cyclophilin-type PPIase family. PPIL2 subfamily.

It is found in the nucleus. It carries out the reaction [protein]-peptidylproline (omega=180) = [protein]-peptidylproline (omega=0). The enzyme catalyses S-ubiquitinyl-[E2 ubiquitin-conjugating enzyme]-L-cysteine + [acceptor protein]-L-lysine = [E2 ubiquitin-conjugating enzyme]-L-cysteine + N(6)-ubiquitinyl-[acceptor protein]-L-lysine.. The protein operates within protein modification; protein ubiquitination. Functionally, may catalyze the cis-trans isomerization of proline imidic peptide bonds in oligopeptides thereby assisting the folding of proteins. May also function as a chaperone, playing a role in intracellular transport of proteins. May also have a protein ubiquitin ligase activity acting as an E3 ubiquitin protein ligase or as a ubiquitin-ubiquitin ligase promoting elongation of ubiquitin chains on proteins. The sequence is that of Peptidyl-prolyl cis-trans isomerase-like 2 (cyp14) from Rhizopus delemar (strain RA 99-880 / ATCC MYA-4621 / FGSC 9543 / NRRL 43880) (Mucormycosis agent).